The primary structure comprises 146 residues: Phosphoribosyl-AMP cyclohydrolase (146 aa).

D95 contacts Mg(2+). A Zn(2+)-binding site is contributed by C96. Residues D97 and D99 each contribute to the Mg(2+) site. Residues C112 and C119 each coordinate Zn(2+).

It belongs to the PRA-CH family. As to quaternary structure, homodimer. The cofactor is Mg(2+). Zn(2+) is required as a cofactor.

The protein localises to the cytoplasm. It catalyses the reaction 1-(5-phospho-beta-D-ribosyl)-5'-AMP + H2O = 1-(5-phospho-beta-D-ribosyl)-5-[(5-phospho-beta-D-ribosylamino)methylideneamino]imidazole-4-carboxamide. The protein operates within amino-acid biosynthesis; L-histidine biosynthesis; L-histidine from 5-phospho-alpha-D-ribose 1-diphosphate: step 3/9. In terms of biological role, catalyzes the hydrolysis of the adenine ring of phosphoribosyl-AMP. The sequence is that of Phosphoribosyl-AMP cyclohydrolase from Chromohalobacter salexigens (strain ATCC BAA-138 / DSM 3043 / CIP 106854 / NCIMB 13768 / 1H11).